The primary structure comprises 472 residues: UDP-N-acetylmuramate--L-alanine ligase (472 aa).

122 to 128 (GTHGKTT) contributes to the ATP binding site.

Belongs to the MurCDEF family.

The protein localises to the cytoplasm. The enzyme catalyses UDP-N-acetyl-alpha-D-muramate + L-alanine + ATP = UDP-N-acetyl-alpha-D-muramoyl-L-alanine + ADP + phosphate + H(+). Its pathway is cell wall biogenesis; peptidoglycan biosynthesis. Cell wall formation. This is UDP-N-acetylmuramate--L-alanine ligase from Thermobifida fusca (strain YX).